The sequence spans 264 residues: Apolipoprotein A-I (264 aa).

The first 18 residues, 1–18 (MRVVVVTLALLFLTGTQA), serve as a signal peptide directing secretion. 2 tandem repeats follow at residues 67 to 88 (LKLA…EDMA) and 89 to 110 (PYYK…AELT). A 10 X approximate tandem repeats region spans residues 67–264 (LKLADNLDTL…LLDELQKTVA (198 aa)). The stretch at 111-121 (KDLEEVKEKIR) is one 3; half-length repeat. Tandem repeats lie at residues 122-143 (PFLD…QRLA), 144-165 (PVAE…QKLT), 166-187 (PVAE…KNLA), 188-209 (PYSD…EKGI), and 210-231 (PQAA…EKMT). A 9; half-length repeat occupies 232–242 (PLVQDFKERLT). Repeat 10 spans residues 243-264 (PYAENLKTRFISLLDELQKTVA).

Belongs to the apolipoprotein A1/A4/E family. Major protein of plasma HDL, also found in chylomicrons.

It localises to the secreted. Its function is as follows. Participates in the reverse transport of cholesterol from tissues to the liver for excretion by promoting cholesterol efflux from tissues and by acting as a cofactor for the lecithin cholesterol acyltransferase (LCAT). In Anas platyrhynchos (Mallard), this protein is Apolipoprotein A-I (APOA1).